The chain runs to 170 residues: uncharacterized protein (170 aa).

In terms of domain architecture, VOC spans 25 to 151 (PALSPHLVVD…FGHHWSLGQP (127 aa)).

This is an uncharacterized protein from Mycobacterium tuberculosis (strain CDC 1551 / Oshkosh).